We begin with the raw amino-acid sequence, 339 residues long: Transcription initiation factor IIB (339 aa).

The TFIIB-type zinc-finger motif lies at 39–70 (EELICPVCGSKSIIKDYERAEIVCEMCGCVLQ). Cys-43, Cys-46, Cys-62, and Cys-65 together coordinate Zn(2+). A run of 2 repeats spans residues 156–239 (SELD…SREL) and 250–331 (DYVP…ELTE).

It belongs to the TFIIB family.

Stabilizes TBP binding to an archaeal box-A promoter. Also responsible for recruiting RNA polymerase II to the pre-initiation complex (DNA-TBP-TFIIB). This Methanococcus maripaludis (strain DSM 14266 / JCM 13030 / NBRC 101832 / S2 / LL) protein is Transcription initiation factor IIB.